Here is a 150-residue protein sequence, read N- to C-terminus: Large ribosomal subunit protein bL9 (150 aa).

It belongs to the bacterial ribosomal protein bL9 family.

Its function is as follows. Binds to the 23S rRNA. The polypeptide is Large ribosomal subunit protein bL9 (Staphylococcus aureus (strain NCTC 8325 / PS 47)).